We begin with the raw amino-acid sequence, 411 residues long: Bifunctional protein GlmU (411 aa).

The tract at residues 1–204 (MDAVILCAGK…ENNIKGIKLN (204 aa)) is pyrophosphorylase. UTP-binding positions include 6–9 (LCAG), Gln-74, and Gly-79. N-acetyl-alpha-D-glucosamine 1-phosphate-binding residues include Thr-80, Gly-132, Glu-144, and Asn-158. Residues 205–224 (GYWNDIGKPWDLLDANTHIL) form a linker region. An N-acetyltransferase region spans residues 225–411 (KNIKTDIKGK…EEIIIKTKRK (187 aa)). The active-site Proton acceptor is the His-308. 2 residues coordinate acetyl-CoA: Ala-384 and Lys-401.

It in the N-terminal section; belongs to the N-acetylglucosamine-1-phosphate uridyltransferase family. This sequence in the C-terminal section; belongs to the transferase hexapeptide repeat family.

The enzyme catalyses N-acetyl-alpha-D-glucosamine 1-phosphate + UTP + H(+) = UDP-N-acetyl-alpha-D-glucosamine + diphosphate. It catalyses the reaction alpha-D-glucosamine 1-phosphate + acetyl-CoA = N-acetyl-alpha-D-glucosamine 1-phosphate + CoA + H(+). It participates in nucleotide-sugar biosynthesis; UDP-N-acetyl-alpha-D-glucosamine biosynthesis; N-acetyl-alpha-D-glucosamine 1-phosphate from alpha-D-glucosamine 6-phosphate (route II): step 2/2. It functions in the pathway nucleotide-sugar biosynthesis; UDP-N-acetyl-alpha-D-glucosamine biosynthesis; UDP-N-acetyl-alpha-D-glucosamine from N-acetyl-alpha-D-glucosamine 1-phosphate: step 1/1. Its function is as follows. Catalyzes the last two sequential reactions in the de novo biosynthetic pathway for UDP-N-acetyl-glucosamine (UDP-GlcNAc). Responsible for the acetylation of GlcN-1-P to GlcNAc-1-P, and for the uridyl transfer from UTP to GlcNAc-1-P, to produce UDP-GlcNAc and pyrophosphate. The protein is Bifunctional protein GlmU of Methanococcus aeolicus (strain ATCC BAA-1280 / DSM 17508 / OCM 812 / Nankai-3).